Here is a 150-residue protein sequence, read N- to C-terminus: Large ribosomal subunit protein uL13 (150 aa).

The interval 130–150 is disordered; that stretch reads EHPHSAQNPQVLSITTNELVK. Residues 134–150 show a composition bias toward polar residues; it reads SAQNPQVLSITTNELVK.

Belongs to the universal ribosomal protein uL13 family. Part of the 50S ribosomal subunit.

Functionally, this protein is one of the early assembly proteins of the 50S ribosomal subunit, although it is not seen to bind rRNA by itself. It is important during the early stages of 50S assembly. This is Large ribosomal subunit protein uL13 from Prochlorococcus marinus (strain SARG / CCMP1375 / SS120).